Consider the following 295-residue polypeptide: Beta-lactamase-like protein 2 homolog (295 aa).

Positions 79, 81, 83, 84, 141, 160, and 195 each coordinate Zn(2+).

This sequence belongs to the metallo-beta-lactamase superfamily. Glyoxalase II family.

The chain is Beta-lactamase-like protein 2 homolog from Caenorhabditis elegans.